Reading from the N-terminus, the 227-residue chain is Flagellar L-ring protein 2 (227 aa).

Positions 1 to 17 are cleaved as a signal peptide; sequence MKSKLAITMVSALLLAA. Cys18 carries N-palmitoyl cysteine lipidation. Cys18 is lipidated: S-diacylglycerol cysteine.

Belongs to the FlgH family. In terms of assembly, the basal body constitutes a major portion of the flagellar organelle and consists of four rings (L,P,S, and M) mounted on a central rod.

The protein localises to the cell outer membrane. The protein resides in the bacterial flagellum basal body. Its function is as follows. Assembles around the rod to form the L-ring and probably protects the motor/basal body from shearing forces during rotation. This chain is Flagellar L-ring protein 2, found in Chromobacterium violaceum (strain ATCC 12472 / DSM 30191 / JCM 1249 / CCUG 213 / NBRC 12614 / NCIMB 9131 / NCTC 9757 / MK).